Consider the following 396-residue polypeptide: Elongation factor Tu (396 aa).

Residues 10–206 form the tr-type G domain; it reads KPHVNVGTIG…ALDSYIPEPE (197 aa). The segment at 19 to 26 is G1; sequence GHVDHGKT. Residue 19–26 participates in GTP binding; it reads GHVDHGKT. Thr-26 contacts Mg(2+). The interval 60 to 64 is G2; sequence GITIN. The G3 stretch occupies residues 81–84; the sequence is DCPG. GTP contacts are provided by residues 81 to 85 and 136 to 139; these read DCPGH and NKAD. The G4 stretch occupies residues 136–139; the sequence is NKAD. The G5 stretch occupies residues 174–176; the sequence is SAL.

Belongs to the TRAFAC class translation factor GTPase superfamily. Classic translation factor GTPase family. EF-Tu/EF-1A subfamily. In terms of assembly, monomer.

The protein resides in the cytoplasm. The catalysed reaction is GTP + H2O = GDP + phosphate + H(+). Functionally, GTP hydrolase that promotes the GTP-dependent binding of aminoacyl-tRNA to the A-site of ribosomes during protein biosynthesis. The polypeptide is Elongation factor Tu (Nitrosomonas europaea (strain ATCC 19718 / CIP 103999 / KCTC 2705 / NBRC 14298)).